The sequence spans 446 residues: Na(+)-translocating NADH-quinone reductase subunit A (446 aa).

This sequence belongs to the NqrA family. In terms of assembly, composed of six subunits; NqrA, NqrB, NqrC, NqrD, NqrE and NqrF.

It carries out the reaction a ubiquinone + n Na(+)(in) + NADH + H(+) = a ubiquinol + n Na(+)(out) + NAD(+). NQR complex catalyzes the reduction of ubiquinone-1 to ubiquinol by two successive reactions, coupled with the transport of Na(+) ions from the cytoplasm to the periplasm. NqrA to NqrE are probably involved in the second step, the conversion of ubisemiquinone to ubiquinol. This is Na(+)-translocating NADH-quinone reductase subunit A from Vibrio parahaemolyticus serotype O3:K6 (strain RIMD 2210633).